A 554-amino-acid polypeptide reads, in one-letter code: 3-(3-hydroxy-phenyl)propionate/3-hydroxycinnamic acid hydroxylase (554 aa).

FAD-binding positions include 17-46 and 285-295; these read QVAI…VVEK and FRIDRVLLAGD.

The protein belongs to the PheA/TfdB FAD monooxygenase family. Requires FAD as cofactor.

The enzyme catalyses 3-(3-hydroxyphenyl)propanoate + NADH + O2 + H(+) = 3-(2,3-dihydroxyphenyl)propanoate + NAD(+) + H2O. It catalyses the reaction (2E)-3-(3-hydroxyphenyl)prop-2-enoate + NADH + O2 + H(+) = (2E)-3-(2,3-dihydroxyphenyl)prop-2-enoate + NAD(+) + H2O. Its pathway is aromatic compound metabolism; 3-phenylpropanoate degradation. In terms of biological role, catalyzes the insertion of one atom of molecular oxygen into position 2 of the phenyl ring of 3-(3-hydroxyphenyl)propionate (3-HPP) and hydroxycinnamic acid (3HCI). In Shigella sonnei (strain Ss046), this protein is 3-(3-hydroxy-phenyl)propionate/3-hydroxycinnamic acid hydroxylase.